We begin with the raw amino-acid sequence, 174 residues long: Transcriptional repressor NrdR (174 aa).

Residues 3-34 (CPICHFPETDVIDTRKLYEGEVIRRRRKCRAC) fold into a zinc finger. Residues 49–139 (LMVVKKDGTR…VYRSFADIGK (91 aa)) form the ATP-cone domain. Residues 151-174 (EGTRNGHSSAATTDQGTTDNHSRM) form a disordered region. A compositionally biased stretch (polar residues) spans 155–174 (NGHSSAATTDQGTTDNHSRM).

The protein belongs to the NrdR family. Zn(2+) is required as a cofactor.

In terms of biological role, negatively regulates transcription of bacterial ribonucleotide reductase nrd genes and operons by binding to NrdR-boxes. The sequence is that of Transcriptional repressor NrdR from Chloroflexus aggregans (strain MD-66 / DSM 9485).